The sequence spans 566 residues: MKQSMVFSPTLREVPADAEIKSHQLLLRAGFMRQNASGIYSFLPLGLKVLHKVEHIIREEMERAGAVELLMPALQAAELWQESGRWYSYGSELMRMKDRNDREFALGATHEEVITDLVRDEIKSYKKLPLTLYQIQTKFRDEQRPRFGLLRGREFLMKDAYSFHATQESLDEVYDRLFQAYSNIFARCGLNFRAVIADSGAMGGKDTHEFMVLSDVGEDTIAYSDTSDYAANIEMAPVVATYTKSDEAEKALEKVATPDQKAIEEVSAFLNIEPSQCIKTMVFKVDEKFVVVLVRGDHEVNDVKVKNVYGASVVELASYEEVRSLLNCEVGSLGPIGIAEDVEVIADHAVAAIVNGCCGANEEGFHYVNVNSERDFKVNQYADLRFIQEGDQSPDGKGTIRFARGIEVGHVFKLGTRYSEAMNATFLDENGKTKPLIMGCYGIGVSRTVAAIAEQFNDENGLVWPKAVAPFHVHVIPVNMKSDVQREVAENIYTSLQEQGYEVLLDDRTERAGVKFADADLFGLPVRVTVGKKADEGIVEVKVRATNESAEVKVEDLHTYIADILK.

The protein belongs to the class-II aminoacyl-tRNA synthetase family. ProS type 1 subfamily. In terms of assembly, homodimer.

The protein localises to the cytoplasm. It carries out the reaction tRNA(Pro) + L-proline + ATP = L-prolyl-tRNA(Pro) + AMP + diphosphate. In terms of biological role, catalyzes the attachment of proline to tRNA(Pro) in a two-step reaction: proline is first activated by ATP to form Pro-AMP and then transferred to the acceptor end of tRNA(Pro). As ProRS can inadvertently accommodate and process non-cognate amino acids such as alanine and cysteine, to avoid such errors it has two additional distinct editing activities against alanine. One activity is designated as 'pretransfer' editing and involves the tRNA(Pro)-independent hydrolysis of activated Ala-AMP. The other activity is designated 'posttransfer' editing and involves deacylation of mischarged Ala-tRNA(Pro). The misacylated Cys-tRNA(Pro) is not edited by ProRS. The sequence is that of Proline--tRNA ligase from Bacillus cytotoxicus (strain DSM 22905 / CIP 110041 / 391-98 / NVH 391-98).